We begin with the raw amino-acid sequence, 450 residues long: Glucose-6-phosphate isomerase (450 aa).

The Proton donor role is filled by glutamate 290. Active-site residues include histidine 311 and lysine 425.

It belongs to the GPI family.

It localises to the cytoplasm. The enzyme catalyses alpha-D-glucose 6-phosphate = beta-D-fructose 6-phosphate. It functions in the pathway carbohydrate biosynthesis; gluconeogenesis. It participates in carbohydrate degradation; glycolysis; D-glyceraldehyde 3-phosphate and glycerone phosphate from D-glucose: step 2/4. Its function is as follows. Catalyzes the reversible isomerization of glucose-6-phosphate to fructose-6-phosphate. The protein is Glucose-6-phosphate isomerase of Listeria innocua serovar 6a (strain ATCC BAA-680 / CLIP 11262).